The primary structure comprises 672 residues: tRNA 5-methylaminomethyl-2-thiouridine biosynthesis bifunctional protein MnmC (672 aa).

Positions Met-1–Glu-243 are tRNA (mnm(5)s(2)U34)-methyltransferase. The tract at residues Ile-269 to Leu-672 is FAD-dependent cmnm(5)s(2)U34 oxidoreductase.

This sequence in the N-terminal section; belongs to the methyltransferase superfamily. tRNA (mnm(5)s(2)U34)-methyltransferase family. The protein in the C-terminal section; belongs to the DAO family. It depends on FAD as a cofactor.

It is found in the cytoplasm. The catalysed reaction is 5-aminomethyl-2-thiouridine(34) in tRNA + S-adenosyl-L-methionine = 5-methylaminomethyl-2-thiouridine(34) in tRNA + S-adenosyl-L-homocysteine + H(+). Functionally, catalyzes the last two steps in the biosynthesis of 5-methylaminomethyl-2-thiouridine (mnm(5)s(2)U) at the wobble position (U34) in tRNA. Catalyzes the FAD-dependent demodification of cmnm(5)s(2)U34 to nm(5)s(2)U34, followed by the transfer of a methyl group from S-adenosyl-L-methionine to nm(5)s(2)U34, to form mnm(5)s(2)U34. The chain is tRNA 5-methylaminomethyl-2-thiouridine biosynthesis bifunctional protein MnmC from Vibrio vulnificus (strain YJ016).